The following is a 101-amino-acid chain: Urease subunit beta (101 aa).

The protein belongs to the urease beta subunit family. In terms of assembly, heterotrimer of UreA (gamma), UreB (beta) and UreC (alpha) subunits. Three heterotrimers associate to form the active enzyme.

It localises to the cytoplasm. The catalysed reaction is urea + 2 H2O + H(+) = hydrogencarbonate + 2 NH4(+). Its pathway is nitrogen metabolism; urea degradation; CO(2) and NH(3) from urea (urease route): step 1/1. The chain is Urease subunit beta from Rhizobium etli (strain ATCC 51251 / DSM 11541 / JCM 21823 / NBRC 15573 / CFN 42).